Here is a 196-residue protein sequence, read N- to C-terminus: Imidazoleglycerol-phosphate dehydratase (196 aa).

It belongs to the imidazoleglycerol-phosphate dehydratase family.

Its subcellular location is the cytoplasm. It catalyses the reaction D-erythro-1-(imidazol-4-yl)glycerol 3-phosphate = 3-(imidazol-4-yl)-2-oxopropyl phosphate + H2O. Its pathway is amino-acid biosynthesis; L-histidine biosynthesis; L-histidine from 5-phospho-alpha-D-ribose 1-diphosphate: step 6/9. The chain is Imidazoleglycerol-phosphate dehydratase from Ralstonia pickettii (strain 12J).